The chain runs to 301 residues: GTPase Era (301 aa).

The 169-residue stretch at 7–175 (YCGFIAIVGR…AAIVRKHLPE (169 aa)) folds into the Era-type G domain. Residues 15–22 (GRPNVGKS) form a G1 region. 15–22 (GRPNVGKS) lines the GTP pocket. The segment at 41–45 (QTTRH) is G2. A G3 region spans residues 62-65 (DTPG). GTP-binding positions include 62–66 (DTPGL) and 124–127 (NKVD). Residues 124 to 127 (NKVD) form a G4 region. The tract at residues 154 to 156 (ISA) is G5. Residues 206-283 (LGAELPYSVT…HLELWVKVKS (78 aa)) enclose the KH type-2 domain.

This sequence belongs to the TRAFAC class TrmE-Era-EngA-EngB-Septin-like GTPase superfamily. Era GTPase family. In terms of assembly, monomer.

It localises to the cytoplasm. The protein resides in the cell inner membrane. In terms of biological role, an essential GTPase that binds both GDP and GTP, with rapid nucleotide exchange. Plays a role in 16S rRNA processing and 30S ribosomal subunit biogenesis and possibly also in cell cycle regulation and energy metabolism. This is GTPase Era from Escherichia coli O157:H7.